Here is a 149-residue protein sequence, read N- to C-terminus: Large ribosomal subunit protein bL9 (149 aa).

Belongs to the bacterial ribosomal protein bL9 family.

Binds to the 23S rRNA. This Laribacter hongkongensis (strain HLHK9) protein is Large ribosomal subunit protein bL9.